A 565-amino-acid chain; its full sequence is NAD-dependent malic enzyme (565 aa).

Tyr-104 (proton donor) is an active-site residue. Arg-157 contacts NAD(+). Lys-175 functions as the Proton acceptor in the catalytic mechanism. Positions 246, 247, and 270 each coordinate a divalent metal cation. Positions 270 and 418 each coordinate NAD(+).

The protein belongs to the malic enzymes family. As to quaternary structure, homotetramer. The cofactor is Mg(2+). Mn(2+) is required as a cofactor.

It carries out the reaction (S)-malate + NAD(+) = pyruvate + CO2 + NADH. The catalysed reaction is oxaloacetate + H(+) = pyruvate + CO2. This Escherichia coli (strain SMS-3-5 / SECEC) protein is NAD-dependent malic enzyme.